A 134-amino-acid polypeptide reads, in one-letter code: Large ribosomal subunit protein bL12 (134 aa).

It belongs to the bacterial ribosomal protein bL12 family. In terms of assembly, homodimer. Part of the ribosomal stalk of the 50S ribosomal subunit. Forms a multimeric L10(L12)X complex, where L10 forms an elongated spine to which 2 to 4 L12 dimers bind in a sequential fashion. Binds GTP-bound translation factors.

Functionally, forms part of the ribosomal stalk which helps the ribosome interact with GTP-bound translation factors. Is thus essential for accurate translation. The protein is Large ribosomal subunit protein bL12 of Chlamydia abortus (strain DSM 27085 / S26/3) (Chlamydophila abortus).